Consider the following 262-residue polypeptide: Troponin T, slow skeletal muscle (262 aa).

The span at 1–31 (MSDAEEQEYEEEQPEEEEAAEEEEAPEEPEP) shows a compositional bias: acidic residues. 3 disordered regions span residues 1–59 (MSDA…PEGE), 107–153 (RAER…KKKV), and 165–197 (LVKAEQKRGKRQTGREMKQRILSERKKPLNIDH). Phosphoserine; by CK2 is present on S2. Over residues 32 to 41 (VAEREEERPK) the composition is skewed to basic and acidic residues. A compositionally biased stretch (pro residues) spans 43–55 (SRPVVPPLIPPKI). Composition is skewed to basic and acidic residues over residues 107–149 (RAER…DDAK) and 177–197 (TGREMKQRILSERKKPLNIDH).

Belongs to the troponin T family. Interacts with TPM3.

In terms of biological role, troponin T is the tropomyosin-binding subunit of troponin, the thin filament regulatory complex which confers calcium-sensitivity to striated muscle actomyosin ATPase activity. This is Troponin T, slow skeletal muscle (TNNT1) from Sus scrofa (Pig).